We begin with the raw amino-acid sequence, 420 residues long: RING finger protein 39 (420 aa).

The RING-type zinc finger occupies 88–135 (CPLCGGSFEDPVLLACEHSFCRACLARRWGTPPATGTEASPTACPCCG). The B30.2/SPRY domain maps to 210–420 (DDLPEDYPVV…APLRIVPAES (211 aa)). Residues 246–265 (DRRSVQLAPPGTPAPPDGPK) are disordered.

It is found in the cytoplasm. It catalyses the reaction S-ubiquitinyl-[E2 ubiquitin-conjugating enzyme]-L-cysteine + [acceptor protein]-L-lysine = [E2 ubiquitin-conjugating enzyme]-L-cysteine + N(6)-ubiquitinyl-[acceptor protein]-L-lysine.. It functions in the pathway protein modification; protein ubiquitination. Its function is as follows. Plays an inhibitory role in anti-RNA viral innate immunity by targeting the adapter DDX3X and promoting its 'Lys-48'-linked polyubiquitination. Alternatively, enhances the cGAS-STING pathway activation by promoting 'Lys-63'-linked ubiquitination of STING1, facilitating the STING1-TBK1 complex formation and STING1 activation. The polypeptide is RING finger protein 39 (RNF39) (Pan troglodytes (Chimpanzee)).